The sequence spans 54 residues: Protein P32 (54 aa).

Residues 4 to 24 (FGKTLITIVTAIIGVAIIAVI) traverse the membrane as a helical segment.

It is found in the virion membrane. Its function is as follows. Component of the phage injection machinery. Required for DNA injection in the membrane transformation event. Involved in the formation of the membrane tail tube to connect the virus interior with the host cytosol. Essential for viral infectivity. In Enterobacteria phage PRD1 (Bacteriophage PRD1), this protein is Protein P32 (XXXII).